The sequence spans 1167 residues: Nucleolar protein 8 (1167 aa).

Positions 8-89 (KRLYVGGLSQ…GTLQIQLAKE (82 aa)) constitute an RRM domain. The tract at residues 223 to 304 (VQKDESSTGS…NSISDDDTDS (82 aa)) is disordered. Lys225 is covalently cross-linked (Glycyl lysine isopeptide (Lys-Gly) (interchain with G-Cter in SUMO2)). The span at 248-275 (LTQQQAAQKRTCDSITPSKSSPVPVSDT) shows a compositional bias: polar residues. 2 positions are modified to phosphoserine: Ser268 and Ser298. Thr302 is modified (phosphothreonine). Ser304 bears the Phosphoserine mark. Lys314 is covalently cross-linked (Glycyl lysine isopeptide (Lys-Gly) (interchain with G-Cter in SUMO2)). Phosphoserine is present on residues Ser331 and Ser365. Tyr376 bears the Phosphotyrosine mark. Ser378 carries the phosphoserine modification. Thr381 is modified (phosphothreonine). Phosphoserine is present on Ser432. 5 disordered regions span residues 435–470 (ESAL…DSEG), 499–533 (LKVP…TGLR), 590–908 (KDSV…EEEL), 932–982 (NRGS…AEKL), and 1006–1026 (YTSE…EKPE). Residues 457 to 470 (EDADSASELADSEG) show a composition bias toward acidic residues. The segment covering 501 to 510 (VPNEDTKSDG) has biased composition (basic and acidic residues). Positions 640 to 652 (NYIQPQKRQTTFE) are enriched in polar residues. A compositionally biased stretch (basic and acidic residues) spans 653–668 (SQDRKAVSPSSSEKRS). Ser723 bears the Phosphoserine mark. Residues 727–736 (SSKDTREIKT) are compositionally biased toward basic and acidic residues. Polar residues predominate over residues 738–748 (FSLSISNSSDV). Residues 749-776 (SAKDKHAEDNEKRLAALEARQKAKEVQK) are compositionally biased toward basic and acidic residues. A coiled-coil region spans residues 753–779 (KHAEDNEKRLAALEARQKAKEVQKKLV). Thr795 carries the post-translational modification Phosphothreonine. Residue Ser801 is modified to Phosphoserine. The span at 817–827 (HPGEEWVKESM) shows a compositional bias: basic and acidic residues. Phosphoserine occurs at positions 837, 838, 843, and 845. The span at 837 to 847 (SSDDDESDSED) shows a compositional bias: acidic residues. Residues 874-887 (GTDDRFRMDSRFLE) show a composition bias toward basic and acidic residues. Residues 886-924 (LETDSEEEQEEVNEKKTAEEEELAEEKKKALNVVQSVLQ) adopt a coiled-coil conformation. Thr888 is subject to Phosphothreonine. A Phosphoserine modification is found at Ser890. 2 stretches are compositionally biased toward basic and acidic residues: residues 940-968 (KFKD…PKES) and 1007-1026 (TSEK…EKPE). Ser1036 carries the phosphoserine modification. Lys1057 is covalently cross-linked (Glycyl lysine isopeptide (Lys-Gly) (interchain with G-Cter in SUMO2)). Disordered stretches follow at residues 1071-1105 (IVWQ…EASL) and 1145-1167 (RTTN…MKPK). A phosphoserine mark is found at Ser1082, Ser1083, Ser1084, and Ser1099. Over residues 1153-1167 (CRKKHKDAKRKMKPK) the composition is skewed to basic residues.

As to quaternary structure, interacts with the GTP form of RRAGA, RRAGC and RRAGD. Interacts with NIP7. Interacts with DDX18; the interaction is RNA-dependent. Interacts with DDX47; the interaction is RNA-dependent. Post-translationally, phosphorylated. As to expression, expressed in various diffuse-type gastric cancers. Detected at lower levels in skeletal muscle.

It is found in the nucleus. It localises to the nucleolus. In terms of biological role, plays an essential role in the survival of diffuse-type gastric cancer cells. Acts as a nucleolar anchoring protein for DDX47. May be involved in regulation of gene expression at the post-transcriptional level or in ribosome biogenesis in cancer cells. The sequence is that of Nucleolar protein 8 from Homo sapiens (Human).